Reading from the N-terminus, the 528-residue chain is Tyrosine--tRNA ligase, cytoplasmic (528 aa).

Residue Y39 participates in L-tyrosine binding. Residues 44–52 (TTGKPHVAY) carry the 'HIGH' region motif. L-tyrosine is bound by residues Y166, Q170, D173, and Q188. The 'KMSKS' region signature appears at 222–226 (KMSSS). The Nuclear localization signal signature appears at 242–247 (KKKLKK). A disordered region spans residues 332–362 (EMKKLSNDAYPDASKQKSVPKGSTKNSGTEE). The 105-residue stretch at 364–468 (DPSLLDLRVG…SGSAPGERIY (105 aa)) folds into the tRNA-binding domain.

This sequence belongs to the class-I aminoacyl-tRNA synthetase family. Homodimer.

The protein resides in the cytoplasm. It localises to the nucleus. It carries out the reaction tRNA(Tyr) + L-tyrosine + ATP = L-tyrosyl-tRNA(Tyr) + AMP + diphosphate + H(+). Functionally, catalyzes the attachment of tyrosine to tRNA(Tyr) in a two-step reaction: tyrosine is first activated by ATP to form Tyr-AMP and then transferred to the acceptor end of tRNA(Tyr). The sequence is that of Tyrosine--tRNA ligase, cytoplasmic (yars1) from Xenopus laevis (African clawed frog).